Here is a 468-residue protein sequence, read N- to C-terminus: Ribulose bisphosphate carboxylase large chain (468 aa).

Lys-5 carries the post-translational modification N6,N6,N6-trimethyllysine. 2 residues coordinate substrate: Asn-114 and Thr-164. Lys-166 acts as the Proton acceptor in catalysis. Lys-168 provides a ligand contact to substrate. Mg(2+) is bound by residues Lys-192, Asp-194, and Glu-195. Lys-192 is subject to N6-carboxylysine. His-285 serves as the catalytic Proton acceptor. Residues Arg-286, His-318, and Ser-370 each contribute to the substrate site.

The protein belongs to the RuBisCO large chain family. Type I subfamily. As to quaternary structure, heterohexadecamer of 8 large chains and 8 small chains; disulfide-linked. The disulfide link is formed within the large subunit homodimers. It depends on Mg(2+) as a cofactor. Post-translationally, the disulfide bond which can form in the large chain dimeric partners within the hexadecamer appears to be associated with oxidative stress and protein turnover.

It localises to the plastid. The protein localises to the chloroplast. The enzyme catalyses 2 (2R)-3-phosphoglycerate + 2 H(+) = D-ribulose 1,5-bisphosphate + CO2 + H2O. It carries out the reaction D-ribulose 1,5-bisphosphate + O2 = 2-phosphoglycolate + (2R)-3-phosphoglycerate + 2 H(+). In terms of biological role, ruBisCO catalyzes two reactions: the carboxylation of D-ribulose 1,5-bisphosphate, the primary event in carbon dioxide fixation, as well as the oxidative fragmentation of the pentose substrate in the photorespiration process. Both reactions occur simultaneously and in competition at the same active site. The protein is Ribulose bisphosphate carboxylase large chain of Solandra grandiflora (Chalice vine).